The chain runs to 210 residues: Probable nicotinate-nucleotide adenylyltransferase (210 aa).

The protein belongs to the NadD family.

It carries out the reaction nicotinate beta-D-ribonucleotide + ATP + H(+) = deamido-NAD(+) + diphosphate. It participates in cofactor biosynthesis; NAD(+) biosynthesis; deamido-NAD(+) from nicotinate D-ribonucleotide: step 1/1. In terms of biological role, catalyzes the reversible adenylation of nicotinate mononucleotide (NaMN) to nicotinic acid adenine dinucleotide (NaAD). This chain is Probable nicotinate-nucleotide adenylyltransferase, found in Streptococcus pyogenes serotype M1.